The chain runs to 151 residues: Flagellar assembly factor FliW 2 (151 aa).

This sequence belongs to the FliW family. In terms of assembly, interacts with translational regulator CsrA and flagellin(s).

The protein resides in the cytoplasm. Acts as an anti-CsrA protein, binds CsrA and prevents it from repressing translation of its target genes, one of which is flagellin. Binds to flagellin and participates in the assembly of the flagellum. This is Flagellar assembly factor FliW 2 from Desulfotalea psychrophila (strain LSv54 / DSM 12343).